The following is a 237-amino-acid chain: MGRKWNNIKEKKASKDKNTSRVYAKFGREIYVAAKQGEPDPESNQALKVVLERAKTYSVPRAIVDRAIEKAKGGAEENFDVLRYEGFGPSGSMVIVETLTNNVNRTASDVRAAFGKNGGNMGVSGSVAYMFDATAIFAFEGKTADDILELMMEADIDVRDILEEEESVIIYAEPEQFHAVQETLKEAGITDFSVAELVMLAQNEVTLSDEDVQQFEKMIDALEDLEDVQQVYHNVEL.

The protein belongs to the TACO1 family. YeeN subfamily.

It is found in the cytoplasm. The protein is Probable transcriptional regulatory protein Exig_1693 of Exiguobacterium sibiricum (strain DSM 17290 / CCUG 55495 / CIP 109462 / JCM 13490 / 255-15).